Consider the following 147-residue polypeptide: Hemoglobin subunit beta (147 aa).

V2 is subject to N-acetylvaline. Residues 3 to 147 (HLTGDEKAAV…VANALAHKYH (145 aa)) form the Globin domain. T13 bears the Phosphothreonine mark. S45 carries the phosphoserine modification. An N6-acetyllysine modification is found at K60. Position 64 (H64) interacts with heme b. K83 is modified (N6-acetyllysine). Residue H93 coordinates heme b. Position 94 is an S-nitrosocysteine (C94). K145 is modified (N6-acetyllysine).

Belongs to the globin family. In terms of assembly, heterotetramer of two alpha chains and two beta chains. In terms of tissue distribution, red blood cells.

Functionally, involved in oxygen transport from the lung to the various peripheral tissues. The polypeptide is Hemoglobin subunit beta (HBB) (Saimiri sciureus (Common squirrel monkey)).